The primary structure comprises 154 residues: Ribosome maturation factor RimP (154 aa).

Belongs to the RimP family.

It localises to the cytoplasm. In terms of biological role, required for maturation of 30S ribosomal subunits. This Prochlorococcus marinus (strain MIT 9303) protein is Ribosome maturation factor RimP.